Consider the following 278-residue polypeptide: Large ribosomal subunit protein uL2 (278 aa).

Disordered regions lie at residues 1–58 (MAIR…GGGH) and 224–278 (VVMN…GKKR). The segment covering 23–33 (EITRDHPEKSL) has biased composition (basic and acidic residues). The segment covering 37–58 (LHGRGGRNAHGRITTRHKGGGH) has biased composition (basic residues). The span at 253–268 (PEGRTRKPKKASDKLI) shows a compositional bias: basic and acidic residues. The span at 269–278 (VRRRRTGKKR) shows a compositional bias: basic residues.

The protein belongs to the universal ribosomal protein uL2 family. Part of the 50S ribosomal subunit. Forms a bridge to the 30S subunit in the 70S ribosome.

In terms of biological role, one of the primary rRNA binding proteins. Required for association of the 30S and 50S subunits to form the 70S ribosome, for tRNA binding and peptide bond formation. It has been suggested to have peptidyltransferase activity; this is somewhat controversial. Makes several contacts with the 16S rRNA in the 70S ribosome. The chain is Large ribosomal subunit protein uL2 from Mycolicibacterium vanbaalenii (strain DSM 7251 / JCM 13017 / BCRC 16820 / KCTC 9966 / NRRL B-24157 / PYR-1) (Mycobacterium vanbaalenii).